Here is an 87-residue protein sequence, read N- to C-terminus: DNA-directed RNA polymerase subunit omega (87 aa).

The protein belongs to the RNA polymerase subunit omega family. The RNAP catalytic core consists of 2 alpha, 1 beta, 1 beta' and 1 omega subunit. When a sigma factor is associated with the core the holoenzyme is formed, which can initiate transcription.

It carries out the reaction RNA(n) + a ribonucleoside 5'-triphosphate = RNA(n+1) + diphosphate. Functionally, promotes RNA polymerase assembly. Latches the N- and C-terminal regions of the beta' subunit thereby facilitating its interaction with the beta and alpha subunits. This chain is DNA-directed RNA polymerase subunit omega, found in Acidothermus cellulolyticus (strain ATCC 43068 / DSM 8971 / 11B).